Consider the following 124-residue polypeptide: Fluoride-specific ion channel FluC 2 (124 aa).

4 consecutive transmembrane segments (helical) span residues 9–29, 34–54, 67–87, and 99–119; these read LGIFLAAMLGGLVRYLVSTWL, DFPWGTLFVNYLGIFCLIFLV, LILALGTGFCGGLTTFSSLML, and FSLVLYLLLSIGGGLLLAYFL. Positions 77 and 80 each coordinate Na(+).

It belongs to the fluoride channel Fluc/FEX (TC 1.A.43) family.

The protein resides in the cell membrane. It carries out the reaction fluoride(in) = fluoride(out). Na(+) is not transported, but it plays an essential structural role and its presence is essential for fluoride channel function. Its function is as follows. Fluoride-specific ion channel. Important for reducing fluoride concentration in the cell, thus reducing its toxicity. The sequence is that of Fluoride-specific ion channel FluC 2 from Streptococcus pneumoniae (strain ATCC BAA-255 / R6).